The sequence spans 218 residues: Ribonuclease HII (218 aa).

The RNase H type-2 domain maps to glutamate 24–threonine 218. The a divalent metal cation site is built by aspartate 30, glutamate 31, and aspartate 126.

The protein belongs to the RNase HII family. Mn(2+) serves as cofactor. Requires Mg(2+) as cofactor.

The protein resides in the cytoplasm. The catalysed reaction is Endonucleolytic cleavage to 5'-phosphomonoester.. Endonuclease that specifically degrades the RNA of RNA-DNA hybrids. In Prochlorococcus marinus (strain MIT 9313), this protein is Ribonuclease HII.